Consider the following 257-residue polypeptide: Lysine-rich coiled-coil protein 1 (257 aa).

The interval 145–257 is disordered; sequence NTSAHQASYK…MLWDQSILGF (113 aa). Positions 152 to 162 are enriched in basic residues; sequence SYKHIHQKRKR. Composition is skewed to basic and acidic residues over residues 163-176, 183-193, 200-212, and 219-228; these read HTEEGREKPEEERP, ACEEIDLDKYK, TEAETVRVSTEKL, and RSRDVASKKE. Positions 210-248 form a coiled coil; that stretch reads EKLKNRKEKRSRDVASKKEERKRRKEKKEQGQERTEEEM.

This is Lysine-rich coiled-coil protein 1 (KRCC1) from Bos taurus (Bovine).